Reading from the N-terminus, the 315-residue chain is ADP/ATP translocase 4 (315 aa).

Residues 1 to 19 (MHREPPKKKAEKRLFDASS) are Mitochondrial intermembrane-facing. A Solcar 1 repeat occupies 18-110 (SSFGKDLLAG…FAFKDKYKQL (93 aa)). The helical transmembrane segment at 20–49 (FGKDLLAGGVAAAVSKTAVAPIERVKLLLQ) threads the bilayer. Over 50 to 86 (VQASSKQISPEARYKGMVDCLVRIPREQGFFSFWRGN) the chain is Mitochondrial matrix. The helical transmembrane segment at 87–111 (LANVIRYFPTQALNFAFKDKYKQLF) threads the bilayer. 2 residues coordinate ADP: Arg92 and Lys104. Over 112–121 (MSGVNKEKQF) the chain is Mitochondrial intermembrane. The chain crosses the membrane as a helical span at residues 122 to 142 (WRWFLANLASGGAAGATSLCV). Solcar repeat units lie at residues 123 to 213 (RWFL…VKGL) and 220 to 307 (TPFL…IKEF). Topologically, residues 143-190 (VYPLDFARTRLGVDIGKGPEERQFKGLGDCIMKIAKSDGIAGLYQGFG) are mitochondrial matrix. A helical transmembrane segment spans residues 191 to 211 (VSVQGIIVYRASYFGAYDTVK). Residues 212–222 (GLLPKPKKTPF) lie on the Mitochondrial intermembrane side of the membrane. Residues 223-243 (LVSFFIAQVVTTCSGILSYPF) form a helical membrane-spanning segment. Topologically, residues 244–283 (DTVRRRMMMQSGEAKRQYKGTLDCFVKIYQHEGINSFFRG) are mitochondrial matrix. Arg247 contributes to the ADP binding site. Residues 247–252 (RRRMMM) are important for transport activity. The Nucleotide carrier signature motif signature appears at 247 to 252 (RRRMMM). Residues 284–301 (AFSNVLRGTGGALVLVLY) form a helical membrane-spanning segment. At 302 to 315 (DKIKEFFHIDIGGR) the chain is on the mitochondrial intermembrane side.

This sequence belongs to the mitochondrial carrier (TC 2.A.29) family. Monomer.

Its subcellular location is the mitochondrion inner membrane. It localises to the membrane. It is found in the cell projection. The protein localises to the cilium. The protein resides in the flagellum membrane. It carries out the reaction ADP(in) + ATP(out) = ADP(out) + ATP(in). It catalyses the reaction dATP(out) + ADP(in) = dATP(in) + ADP(out). The catalysed reaction is dADP(in) + ADP(out) = dADP(out) + ADP(in). The enzyme catalyses H(+)(in) = H(+)(out). The matrix-open state (m-state) is inhibited by the membrane-permeable bongkrekic acid (BKA). The cytoplasmic-open state (c-state) is inhibited by the membrane-impermeable toxic inhibitor carboxyatractyloside (CATR). Proton transporter activity is inhibited by ADP:ATP antiporter activity. ADP:ATP antiporter that mediates import of ADP into the mitochondrial matrix for ATP synthesis, and export of ATP out to fuel the cell. Cycles between the cytoplasmic-open state (c-state) and the matrix-open state (m-state): operates by the alternating access mechanism with a single substrate-binding site intermittently exposed to either the cytosolic (c-state) or matrix (m-state) side of the inner mitochondrial membrane. Specifically required during spermatogenesis, probably to mediate ADP:ATP exchange in spermatocytes. Large ATP supplies from mitochondria may be critical for normal progression of spermatogenesis during early stages of meiotic prophase I, including DNA double-strand break repair and chromosomal synapsis. In addition to its ADP:ATP antiporter activity, also involved in mitochondrial uncoupling and mitochondrial permeability transition pore (mPTP) activity. Plays a role in mitochondrial uncoupling by acting as a proton transporter: proton transport uncouples the proton flows via the electron transport chain and ATP synthase to reduce the efficiency of ATP production and cause mitochondrial thermogenesis. Proton transporter activity is inhibited by ADP:ATP antiporter activity, suggesting that SLC25A31/ANT4 acts as a master regulator of mitochondrial energy output by maintaining a delicate balance between ATP production (ADP:ATP antiporter activity) and thermogenesis (proton transporter activity). Proton transporter activity requires free fatty acids as cofactor, but does not transport it. Among nucleotides, may also exchange ADP for dATP and dADP. Also plays a key role in mPTP opening, a non-specific pore that enables free passage of the mitochondrial membranes to solutes of up to 1.5 kDa, and which contributes to cell death. It is however unclear if SLC25A31/ANT4 constitutes a pore-forming component of mPTP or regulates it. The chain is ADP/ATP translocase 4 from Macaca fascicularis (Crab-eating macaque).